Reading from the N-terminus, the 219-residue chain is Ribose-5-phosphate isomerase A (219 aa).

Substrate contacts are provided by residues 28 to 31, 81 to 84, and 94 to 97; these read SGST, DGAD, and KGGG. The Proton acceptor role is filled by glutamate 103. Lysine 121 is a substrate binding site.

It belongs to the ribose 5-phosphate isomerase family. As to quaternary structure, homodimer.

It carries out the reaction aldehydo-D-ribose 5-phosphate = D-ribulose 5-phosphate. Its pathway is carbohydrate degradation; pentose phosphate pathway; D-ribose 5-phosphate from D-ribulose 5-phosphate (non-oxidative stage): step 1/1. Catalyzes the reversible conversion of ribose-5-phosphate to ribulose 5-phosphate. The protein is Ribose-5-phosphate isomerase A of Histophilus somni (strain 2336) (Haemophilus somnus).